Consider the following 369-residue polypeptide: Glutamate 5-kinase (369 aa).

An ATP-binding site is contributed by lysine 9. Serine 49, aspartate 136, and asparagine 148 together coordinate substrate. Residues 168 to 169 (TD) and 210 to 216 (TGGMLTK) contribute to the ATP site. The 81-residue stretch at 275 to 355 (QGSIWVDKGA…KGVLIYRDDW (81 aa)) folds into the PUA domain.

It belongs to the glutamate 5-kinase family.

The protein localises to the cytoplasm. It carries out the reaction L-glutamate + ATP = L-glutamyl 5-phosphate + ADP. It functions in the pathway amino-acid biosynthesis; L-proline biosynthesis; L-glutamate 5-semialdehyde from L-glutamate: step 1/2. Catalyzes the transfer of a phosphate group to glutamate to form L-glutamate 5-phosphate. This chain is Glutamate 5-kinase, found in Streptococcus pneumoniae serotype 4 (strain ATCC BAA-334 / TIGR4).